Reading from the N-terminus, the 594-residue chain is Interactor of HORMAD1 protein 1 (594 aa).

Coiled-coil stretches lie at residues 109-135 (VGKS…SETL), 165-189 (QSIL…NDLV), and 219-245 (EMKS…CEQL). Over residues 434-443 (VEMRGKDKKQ) the composition is skewed to basic and acidic residues. The disordered stretch occupies residues 434-454 (VEMRGKDKKQQPRKAHRAHRG). Residues 444-454 (QPRKAHRAHRG) are compositionally biased toward basic residues. Phosphoserine is present on residues Ser-588 and Ser-589.

In terms of assembly, part of the MCD recombinosome complex, at least composed of IHO1, REC114 and MEI4. Interacts with REC114. Interacts with MEI4. Interacts with HORMAD1. Interacts with ANKRD31.

The protein localises to the chromosome. Functionally, required for DNA double-strand breaks (DSBs) formation in unsynapsed regions during meiotic recombination. Probably acts by forming a complex with MEI4 and REC114, which activates DSBs formation in unsynapsed regions, an essential step to ensure completion of synapsis. Not required for HORMAD1 functions in pairing-independent synaptonemal complex formation, ATR recruitment to unsynapsed axes, meiotic silencing of unsynapsed chromatin (MSUC) or meiotic surveillance. The protein is Interactor of HORMAD1 protein 1 of Homo sapiens (Human).